The chain runs to 197 residues: MKVLQEKILNEGKVLSGDVLKVDAFLNHQIDPVLMQEIGKEFAKRFKEENITKIVTIESSGIAPAVMAALELGVKVIFARKRKSLTLQDNMYVASVYSFTKQETNEISLSRNHIDESDRVLIIDDFLANGQAALGLMSLVEQAGASIAGIGIVIEKAFQDGGKKLREQGIRVESLAEIASLDNNAVTFVQQETAEVK.

Xanthine-binding residues include Leu20 and Asn27. Position 128-132 (128-132) interacts with 5-phospho-alpha-D-ribose 1-diphosphate; it reads ANGQA. Lys156 is a binding site for xanthine.

The protein belongs to the purine/pyrimidine phosphoribosyltransferase family. Xpt subfamily. In terms of assembly, homodimer.

The protein resides in the cytoplasm. The catalysed reaction is XMP + diphosphate = xanthine + 5-phospho-alpha-D-ribose 1-diphosphate. Its pathway is purine metabolism; XMP biosynthesis via salvage pathway; XMP from xanthine: step 1/1. Its function is as follows. Converts the preformed base xanthine, a product of nucleic acid breakdown, to xanthosine 5'-monophosphate (XMP), so it can be reused for RNA or DNA synthesis. This chain is Xanthine phosphoribosyltransferase, found in Bacillus cereus (strain ZK / E33L).